Reading from the N-terminus, the 69-residue chain is Toxin Lc a (69 aa).

4 disulfides stabilise this stretch: cysteine 3-cysteine 20, cysteine 13-cysteine 41, cysteine 45-cysteine 56, and cysteine 57-cysteine 62.

This sequence belongs to the three-finger toxin family. Long-chain subfamily. Type II alpha-neurotoxin sub-subfamily. Expressed by the venom gland.

It is found in the secreted. Binds with high affinity to muscular nicotinic acetylcholine receptors (nAChRs), whereas it binds with a low affinity to neuronal alpha-7/CHRNA7 nAChRs. The sequence is that of Toxin Lc a from Laticauda colubrina (Yellow-lipped sea krait).